The chain runs to 73 residues: UPF0235 protein PCC7424_0673 (73 aa).

It belongs to the UPF0235 family.

In Gloeothece citriformis (strain PCC 7424) (Cyanothece sp. (strain PCC 7424)), this protein is UPF0235 protein PCC7424_0673.